A 385-amino-acid chain; its full sequence is Galactokinase (385 aa).

34 to 37 is a substrate binding site; that stretch reads EHTD. Residue 124 to 130 participates in ATP binding; sequence SSGLSSS. Mg(2+) contacts are provided by Ser130 and Glu162. The Proton acceptor role is filled by Asp174. Tyr223 is a binding site for substrate.

Belongs to the GHMP kinase family. GalK subfamily.

It is found in the cytoplasm. It catalyses the reaction alpha-D-galactose + ATP = alpha-D-galactose 1-phosphate + ADP + H(+). It functions in the pathway carbohydrate metabolism; galactose metabolism. Functionally, catalyzes the transfer of the gamma-phosphate of ATP to D-galactose to form alpha-D-galactose-1-phosphate (Gal-1-P). The protein is Galactokinase of Mannheimia succiniciproducens (strain KCTC 0769BP / MBEL55E).